The chain runs to 380 residues: Cytochrome b (380 aa).

4 helical membrane-spanning segments follow: residues 33–53 (FGSL…FLAM), 77–98 (WLIR…YMHI), 113–133 (WNIG…GYVL), and 178–198 (FFAF…LHLL). 2 residues coordinate heme b: H83 and H97. Residues H182 and H196 each contribute to the heme b site. Residue H201 coordinates a ubiquinone. 4 helical membrane passes run 226-246 (YKDL…ALFA), 288-308 (LGGV…PILH), 320-340 (LTQF…WIGG), and 347-367 (FIII…VLAP).

This sequence belongs to the cytochrome b family. As to quaternary structure, the cytochrome bc1 complex contains 3 respiratory subunits (MT-CYB, CYC1 and UQCRFS1), 2 core proteins (UQCRC1 and UQCRC2) and probably 6 low-molecular weight proteins. The cofactor is heme b.

Its subcellular location is the mitochondrion inner membrane. Its function is as follows. Component of the ubiquinol-cytochrome c reductase complex (complex III or cytochrome b-c1 complex) that is part of the mitochondrial respiratory chain. The b-c1 complex mediates electron transfer from ubiquinol to cytochrome c. Contributes to the generation of a proton gradient across the mitochondrial membrane that is then used for ATP synthesis. This is Cytochrome b (mt-cyb) from Salmo trutta (Brown trout).